The sequence spans 512 residues: Histidine ammonia-lyase (512 aa).

A cross-link (5-imidazolinone (Ala-Gly)) is located at residues 142–144 (ASG). Ser143 carries the 2,3-didehydroalanine (Ser) modification.

This sequence belongs to the PAL/histidase family. Contains an active site 4-methylidene-imidazol-5-one (MIO), which is formed autocatalytically by cyclization and dehydration of residues Ala-Ser-Gly.

The protein resides in the cytoplasm. The catalysed reaction is L-histidine = trans-urocanate + NH4(+). The protein operates within amino-acid degradation; L-histidine degradation into L-glutamate; N-formimidoyl-L-glutamate from L-histidine: step 1/3. The polypeptide is Histidine ammonia-lyase (Allorhizobium ampelinum (strain ATCC BAA-846 / DSM 112012 / S4) (Agrobacterium vitis (strain S4))).